Reading from the N-terminus, the 418-residue chain is Cytochrome P450 monooxygenase ABA2 (418 aa).

Residue Cys-355 participates in heme binding.

This sequence belongs to the cytochrome P450 family. Heme serves as cofactor.

It participates in hormone biosynthesis. In terms of biological role, cytochrome P450 monooxygenase involved in the biosynthesis of abscisic acid (ABA), a phytohormone that acts antagonistically toward salicylic acid (SA), jasmonic acid (JA) and ethylene (ETH) signaling, to impede plant defense responses. During pathogen-host interaction, ABA plays a dual role in disease severity by increasing plant susceptibility and accelerating pathogenesis in the fungus itself. The first step of the pathway catalyzes the reaction from farnesyl diphosphate to alpha-ionylideneethane performed by the alpha-ionylideneethane synthase ABA3 via a three-step reaction mechanism involving 2 neutral intermediates, beta-farnesene and allofarnesene. The cytochrome P450 monooxygenase ABA1 might then be involved in the conversion of alpha-ionylideneethane to alpha-ionylideneacetic acid. Alpha-ionylideneacetic acid is further converted to abscisic acid in 2 steps involving the cytochrome P450 monooxygenase ABA2 and the short-chain dehydrogenase/reductase ABA4, via the intermediates 1'-deoxy-ABA or 1',4'-trans-diol-ABA, depending on the order of action of these 2 enzymes. ABA2 is responsible for the hydroxylation of carbon atom C-1' and ABA4 might be involved in the oxidation of the C-4' carbon atom. This chain is Cytochrome P450 monooxygenase ABA2, found in Pyricularia oryzae (strain Y34) (Rice blast fungus).